A 131-amino-acid polypeptide reads, in one-letter code: Profilin-A (131 aa).

Belongs to the profilin family. Occurs in many kinds of cells as a complex with monomeric actin in a 1:1 ratio.

Its subcellular location is the cytoplasm. The protein localises to the cytoskeleton. In terms of biological role, binds to actin and affects the structure of the cytoskeleton. At high concentrations, profilin prevents the polymerization of actin, whereas it enhances it at low concentrations. By binding to PIP2, it inhibits the formation of IP3 and DG. May serve as a modulator in pollen germination and pollen tube growth. The protein is Profilin-A of Oryza sativa subsp. japonica (Rice).